The primary structure comprises 455 residues: N(5)-hydroxyornithine:cis-anhydromevalonyl coenzyme A-N(5)-transacylase SIDF (455 aa).

The PTS1-type peroxisomal targeting signal signature appears at 453–455; it reads PKL.

This sequence belongs to the lysine N-acyltransferase mbtK family.

Its subcellular location is the peroxisome. It participates in siderophore biosynthesis. Its function is as follows. Hydroxyornithine transacylase; part of the gene cluster that mediates the biosynthesis of at least 11 siderophores, including beauverichelin A, dimerumic acid (DA), Na-dimethyl coprogen (NADC), eleutherazine B, ferricrocin (FC), fusarinine A, fusarinine C (FsC), metachelin A, mevalonolactone, rhodotorulic acid (RA) and tenellin. This cocktail of siderophores for iron metabolism is essential for virulence, and more specifically for the fungal virulence in penetrating through the host cuticle. Siderophore synthesis is also involved in conidial germination under iron-deficient conditions. For biosynthesis of fusarinine C, the transacylase SIDF transfers anhydromevalonyl to N(5)-hydroxyornithine. The required anhydromevalonyl-CoA moiety is derived from mevalonate by CoA ligation and dehydration catalyzed by SIDI and sidH respectively. This is N(5)-hydroxyornithine:cis-anhydromevalonyl coenzyme A-N(5)-transacylase SIDF from Beauveria bassiana (strain ARSEF 2860) (White muscardine disease fungus).